Consider the following 99-residue polypeptide: Cyclin-dependent protein kinase inhibitor SMR7 (99 aa).

The segment at 49 to 70 (ICITPTARGAKTPECPAAPRKR) is disordered.

Expressed in root meristems after induction.

Its function is as follows. Probable cyclin-dependent protein kinase (CDK) inhibitor that functions as a repressor of mitosis in the endoreduplication cell cycle. Acts as a potent cell cycle inhibitor, regulating a hydroxyurea-dependent checkpoint in leaves. This is Cyclin-dependent protein kinase inhibitor SMR7 from Arabidopsis thaliana (Mouse-ear cress).